The following is a 310-amino-acid chain: Thiamine-monophosphate kinase (310 aa).

Mg(2+)-binding residues include Asp26, Thr40, Ser41, and Asp42. Asp49 provides a ligand contact to substrate. Asp70 and Asp118 together coordinate Mg(2+). ATP-binding positions include 117–118 (GD) and Arg141. Asp202 lines the Mg(2+) pocket. Position 204 (Ser204) interacts with ATP. Residue Asp205 coordinates Mg(2+). Glu251 and Trp299 together coordinate substrate.

It belongs to the thiamine-monophosphate kinase family.

The catalysed reaction is thiamine phosphate + ATP = thiamine diphosphate + ADP. Its pathway is cofactor biosynthesis; thiamine diphosphate biosynthesis; thiamine diphosphate from thiamine phosphate: step 1/1. In terms of biological role, catalyzes the ATP-dependent phosphorylation of thiamine-monophosphate (TMP) to form thiamine-pyrophosphate (TPP), the active form of vitamin B1. The chain is Thiamine-monophosphate kinase from Pyrococcus abyssi (strain GE5 / Orsay).